Reading from the N-terminus, the 865-residue chain is Cadherin-related family member 1 (865 aa).

The first 23 residues, Met-1 to Ala-23, serve as a signal peptide directing secretion. Topologically, residues Asn-24–Gly-705 are extracellular. 6 Cadherin domains span residues Asn-38–Phe-137, Ile-138–Phe-249, Ile-250–Phe-356, Pro-362–Phe-475, Ser-476–Phe-579, and Asp-571–Ala-690. Residues Val-706 to Phe-726 form a helical membrane-spanning segment. The Cytoplasmic portion of the chain corresponds to Trp-727–Ile-865. Positions Glu-782–Gly-810 are disordered. The segment covering Pro-792 to Ala-805 has biased composition (pro residues).

It is found in the membrane. Potential calcium-dependent cell-adhesion protein. In Gallus gallus (Chicken), this protein is Cadherin-related family member 1 (CDHR1).